The following is a 455-amino-acid chain: Kynurenine 3-monooxygenase (455 aa).

The protein belongs to the aromatic-ring hydroxylase family. KMO subfamily. The cofactor is FAD.

It catalyses the reaction L-kynurenine + NADPH + O2 + H(+) = 3-hydroxy-L-kynurenine + NADP(+) + H2O. The protein operates within cofactor biosynthesis; NAD(+) biosynthesis; quinolinate from L-kynurenine: step 1/3. Catalyzes the hydroxylation of L-kynurenine (L-Kyn) to form 3-hydroxy-L-kynurenine (L-3OHKyn). Required for synthesis of quinolinic acid. The protein is Kynurenine 3-monooxygenase of Xanthomonas axonopodis pv. citri (strain 306).